Consider the following 384-residue polypeptide: 8-amino-7-oxononanoate synthase (384 aa).

Substrate is bound at residue Arg21. Pyridoxal 5'-phosphate is bound at residue 108-109 (GY). Substrate is bound at residue His133. 3 residues coordinate pyridoxal 5'-phosphate: Ser179, His207, and Thr233. At Lys236 the chain carries N6-(pyridoxal phosphate)lysine. Thr350 contributes to the substrate binding site.

It belongs to the class-II pyridoxal-phosphate-dependent aminotransferase family. BioF subfamily. As to quaternary structure, homodimer. Pyridoxal 5'-phosphate is required as a cofactor.

It carries out the reaction 6-carboxyhexanoyl-[ACP] + L-alanine + H(+) = (8S)-8-amino-7-oxononanoate + holo-[ACP] + CO2. Its pathway is cofactor biosynthesis; biotin biosynthesis. Functionally, catalyzes the decarboxylative condensation of pimeloyl-[acyl-carrier protein] and L-alanine to produce 8-amino-7-oxononanoate (AON), [acyl-carrier protein], and carbon dioxide. The protein is 8-amino-7-oxononanoate synthase of Buchnera aphidicola subsp. Baizongia pistaciae (strain Bp).